Here is a 757-residue protein sequence, read N- to C-terminus: Transcription regulator rua1 (757 aa).

Disordered stretches follow at residues 122–169 (SSGS…LPVS), 181–218 (NHQVTTQDASVQPKLEKQCQPPSHNVNQQNAFASSNQD), 237–295 (RNTG…NGYT), 372–393 (SADCGLLPRPPSNSPEPHPYPL), and 422–582 (MELQ…IGNA). Low complexity predominate over residues 125 to 165 (SATKSEPSTCSSSTDFSMSSTADASTAPQHSSSGDSSMSSG). Composition is skewed to polar residues over residues 181–190 (NHQVTTQDAS) and 200–218 (QPPSHNVNQQNAFASSNQD). Basic residues predominate over residues 240-249 (GHRQHNRHQK). Residues 253 to 277 (LPQGQSCTNSGSSSRQVTRPNSPNH) are compositionally biased toward polar residues. Residues 379-393 (PRPPSNSPEPHPYPL) show a composition bias toward pro residues. The span at 428-437 (PARSNSTFGR) shows a compositional bias: polar residues. Residues 439–453 (SQRHHQPPPSHRQRS) show a composition bias toward basic residues. 3 stretches are compositionally biased toward low complexity: residues 454-465 (RTSASSISNTNA), 494-510 (ASQSPSSPSESTAATDA), and 543-582 (TSSSVSALTSTTTTTVSTGASSVASSISGPSSASSGIGNA). The segment at 661 to 692 (REGWCSLCPQGEWYSMKRSQYLYHMQFDHGIS) adopts a C2H2-type 1 degenerate zinc-finger fold. A C2H2-type 2; degenerate zinc finger spans residues 717–750 (GLCHHCNKWIPICFGPQRKRDFKAWFKHARKCHR).

The protein resides in the nucleus. Transcription factor; part of the gene cluster that mediates the biosynthesis of the glycolipid biosurfactant ustilagic acid (UA). UA is a secreted cellobiose glycolipid that is toxic for many microorganisms and confers biocontrol activity to U.maydis. Recognizes and binds to the specific 5'-T/G-G/T-C-G-C-A-T-A/T-C/T-C/T-G/A-3' upstream activating sequence found in all promoters of the UA biosynthesis genes. This Mycosarcoma maydis (Corn smut fungus) protein is Transcription regulator rua1.